Reading from the N-terminus, the 164-residue chain is Dynein regulatory complex protein 8 (164 aa).

EF-hand domains are found at residues 16–51 (ELHK…LGCC) and 94–129 (AAED…EGEP).

Belongs to the DRC8 family. In terms of assembly, component of the nexin-dynein regulatory complex (N-DRC).

The protein localises to the cytoplasm. The protein resides in the cytoskeleton. It localises to the flagellum axoneme. Component of the nexin-dynein regulatory complex (N-DRC), a key regulator of ciliary/flagellar motility which maintains the alignment and integrity of the distal axoneme and regulates microtubule sliding in motile axonemes. This chain is Dynein regulatory complex protein 8 (Efcab2), found in Mus musculus (Mouse).